We begin with the raw amino-acid sequence, 209 residues long: Small ribosomal subunit protein uS4 (209 aa).

Residues cysteine 9, cysteine 12, cysteine 26, and cysteine 31 each coordinate Zn(2+). Residues cysteine 9 to cysteine 31 form a C4-type zinc finger. One can recognise an S4 RNA-binding domain in the interval alanine 98 to isoleucine 161.

It belongs to the universal ribosomal protein uS4 family. Part of the 30S ribosomal subunit. Contacts protein S5. The interaction surface between S4 and S5 is involved in control of translational fidelity. The cofactor is Zn(2+).

In terms of biological role, one of the primary rRNA binding proteins, it binds directly to 16S rRNA where it nucleates assembly of the body of the 30S subunit. Functionally, with S5 and S12 plays an important role in translational accuracy. This is Small ribosomal subunit protein uS4 (rpsD) from Thermotoga maritima (strain ATCC 43589 / DSM 3109 / JCM 10099 / NBRC 100826 / MSB8).